We begin with the raw amino-acid sequence, 101 residues long: Anti-lipopolysaccharide factor (101 aa).

A disulfide bond links Cys-31 and Cys-52.

Functionally, binds tightly to LPS and thus specifically inhibits the LPS-mediated activation of the hemolymph coagulation. It has a strong antibacterial effect especially on the growth of Gram-negative bacteria. This chain is Anti-lipopolysaccharide factor, found in Limulus polyphemus (Atlantic horseshoe crab).